The chain runs to 481 residues: Rho GTPase-activating protein 15 (481 aa).

5 positions are modified to phosphoserine: S51, S111, S204, S207, and S249. The PH domain maps to 87-197 (MVEKEGYLQK…WFQAIKNAID (111 aa)). The Rho-GAP domain maps to 287-476 (SHLHTVCERE…FMLTEYDKIF (190 aa)).

It localises to the cytoplasm. Its subcellular location is the membrane. Its function is as follows. GTPase activator for the Rho-type GTPases by converting them to an inactive GDP-bound state. Has activity toward RAC1. Overexpression results in an increase in actin stress fibers and cell contraction. The chain is Rho GTPase-activating protein 15 (Arhgap15) from Mus musculus (Mouse).